The sequence spans 113 residues: U11-theraphotoxin-Hhn1n (113 aa).

A signal peptide spans 1–21 (MNTVRVTFLLVFVLAVSLGQA). A propeptide spanning residues 22–74 (DKDENRMEMQEKTEQGKSYLDFAENLLLQKLEELEAKLLEEDSEESRNSRQKR) is cleaved from the precursor. Over residues 60 to 69 (LEEDSEESRN) the composition is skewed to basic and acidic residues. The tract at residues 60-83 (LEEDSEESRNSRQKRCIGEGVPCD) is disordered. Intrachain disulfides connect cysteine 75–cysteine 90 and cysteine 89–cysteine 110.

Belongs to the neurotoxin 14 (magi-1) family. 01 (HNTX-16) subfamily. As to expression, expressed by the venom gland.

It is found in the secreted. In terms of biological role, probable ion channel inhibitor. The sequence is that of U11-theraphotoxin-Hhn1n from Cyriopagopus hainanus (Chinese bird spider).